The sequence spans 181 residues: Probable pyruvoyl-dependent arginine decarboxylase (181 aa).

Position 43 is a pyruvic acid (Ser) (S43).

This sequence belongs to the PdaD family. It depends on pyruvate as a cofactor.

The enzyme catalyses L-arginine + H(+) = agmatine + CO2. This chain is Probable pyruvoyl-dependent arginine decarboxylase, found in Chlorobaculum tepidum (strain ATCC 49652 / DSM 12025 / NBRC 103806 / TLS) (Chlorobium tepidum).